A 1119-amino-acid chain; its full sequence is MMSSCGPLLLAVSCCLVALTSSLNLDDPNVCSHWESYSVTVQETYAHPFDQIYYTSCTDILNWFKCTQHRVSYRTAYRRGEKTMHRRKSQCCPGFYESGDICVPHCAEKCVHGRCVAPNTCQCEPGWGGADCSSACDRDHWGPHCSSRCQCKNEALCNPITGACICAPGYHGWRCEDLCDHSTYGNNCQQKCLCQNNATCHHITGECVCSPGYTGAFCEDLCPPGKHGQQCEERCPCQNGGVCHHVTGECSCPAGWGMVCGQPCPTGRFGKNCSQECQCHNGGICSPSTGQCVCSSGYTGERCQDQCQVGTYGIGCSQACRCVNGAQCYHVSGACLCEQGYTGESCEERICPDGQYGLKCDRKCPCNTNNTRSCHPMSGECSCQSGWSGLYCNETCAPGFYGEACQEVCRCQNGADCHSVSGECICAPGYKGSDCAIACPPGTYGINCTSLCSCKNGAICSPIDGSCSCQAGWHGVDCSINCPSGTWGLGCNLSCVCGNGGACNALDGKCTCTPGWRGDRCDQHCQDGTYGLDCRERCDCSHADGCHPSTGHCRCLAGWTGIHCDSVCAEGRWGPNCSLSCNCKNSASCSPDEGACECAPGFRGTTCQHICSPGVFGHRCSQACPHCVHSNGPCHHVTGQCECLPGFKGALCNEVCPSGKFGKNCGGSCTCTNNGTCSPMDGSCQCYPGWIGSDCSQPCPPGQWGPNCIHTCNCHNGAFCSAYDGECKCTAGWTGLYCTQRCPLGFYGKDCVQACQCENGADCNHISGQCTCRTGFMGRHCETKCPAGSYGYGCRQVCDCLNNSTCDHMTGTCYCNPGWKGTRCDQAGGNIAESPNSLTSAALPMDSYQIGAITGIIILVLLVLILLLLFIIYRKKQKGKESSMPSVTYTPTMRANTDYAIAESLPQTEVLPNSNYFSNPSYHTLTQCSSPPHINNIPYGKMNNNQLFVNLKNTEPRKRLSLLDHTGTLPADWKQGGSFSELGAYGVDRRYMGKSLRDLVKSLPYHASSCSLNSSENPYATIKDPPLLLTKSTECGYVEMKSPAHRDSPYAEIHSSSPANKNVYEVEPTISSVQALTNNNCNGPFCQDPYDLPKNSHIPCHYDLLPTRDSSPSPTEDSK.

The first 22 residues, 1–22 (MMSSCGPLLLAVSCCLVALTSS), serve as a signal peptide directing secretion. The Extracellular portion of the chain corresponds to 23–851 (LNLDDPNVCS…ALPMDSYQIG (829 aa)). An EMI domain is found at 27-104 (DPNVCSHWES…FYESGDICVP (78 aa)). 15 disulfides stabilise this stretch: Cys31/Cys92, Cys57/Cys66, Cys91/Cys102, Cys102/Cys115, Cys106/Cys121, Cys123/Cys132, Cys145/Cys157, Cys151/Cys164, Cys166/Cys175, Cys188/Cys200, Cys194/Cys207, Cys209/Cys218, Cys231/Cys243, Cys237/Cys250, and Cys252/Cys260. 4 consecutive EGF-like domains span residues 98 to 133 (SGDI…ADCS), 141 to 176 (WGPH…WRCE), 184 to 219 (YGNN…AFCE), and 227 to 261 (HGQQ…MVCG). Asn197 carries an N-linked (GlcNAc...) asparagine glycan. An N-linked (GlcNAc...) asparagine glycan is attached at Asn272. 2 consecutive EGF-like domains span residues 274-304 (SQEC…ERCQ) and 312-347 (YGIG…ESCE). 6 disulfide bridges follow: Cys277/Cys285, Cys279/Cys292, Cys294/Cys303, Cys316/Cys328, Cys322/Cys335, and Cys337/Cys346. N-linked (GlcNAc...) asparagine glycosylation is found at Asn369 and Asn393. EGF-like domains lie at 401–436 (YGEA…SDCA), 444–479 (YGIN…VDCS), 487–522 (WGLG…DRCD), 573–608 (WGPN…TTCQ), 616–653 (FGHR…ALCN), 666–696 (GGSC…SDCS), 709–739 (IHTC…LYCT), 747–782 (YGKD…RHCE), and 795–825 (RQVC…TRCD). 3 cysteine pairs are disulfide-bonded: Cys405-Cys417, Cys411-Cys424, and Cys426-Cys435. Asn447 carries N-linked (GlcNAc...) asparagine glycosylation. 6 disulfide bridges follow: Cys448–Cys460, Cys454–Cys467, Cys469–Cys478, Cys491–Cys503, Cys497–Cys510, and Cys512–Cys521. Asn492 carries N-linked (GlcNAc...) asparagine glycosylation. A glycan (N-linked (GlcNAc...) asparagine) is linked at Asn576. Intrachain disulfides connect Cys577-Cys589, Cys583-Cys596, Cys598-Cys607, Cys620-Cys634, Cys624-Cys641, Cys643-Cys652, Cys669-Cys677, Cys671-Cys684, Cys686-Cys695, Cys712-Cys720, Cys714-Cys727, Cys729-Cys738, Cys751-Cys763, Cys757-Cys770, Cys772-Cys781, Cys798-Cys806, Cys800-Cys813, and Cys815-Cys824. N-linked (GlcNAc...) asparagine glycosylation is present at Asn674. N-linked (GlcNAc...) asparagine glycosylation is present at Asn803. A helical transmembrane segment spans residues 852–872 (AITGIIILVLLVLILLLLFII). The Cytoplasmic portion of the chain corresponds to 873 to 1119 (YRKKQKGKES…SSPSPTEDSK (247 aa)).

The protein belongs to the MEGF family.

The protein resides in the cell membrane. Membrane receptor involved in phagocytosis by macrophages and astrocytes of apoptotic cells. Essential factor in the regulation of muscle development including myogenesis. Likely plays a key role in muscle cell proliferation, adhesion and motility. May control the balance between skeletal muscle satellite cells proliferation and differentiation through regulation of the notch signaling pathway. The polypeptide is Multiple epidermal growth factor-like domains protein 10 (Danio rerio (Zebrafish)).